The following is a 35-amino-acid chain: Endochitinase 2 (35 aa).

It belongs to the glycosyl hydrolase 19 family. Chitinase class I subfamily.

It carries out the reaction Random endo-hydrolysis of N-acetyl-beta-D-glucosaminide (1-&gt;4)-beta-linkages in chitin and chitodextrins.. Defense against chitin-containing fungal pathogens. The chain is Endochitinase 2 from Capsicum chinense (Scotch bonnet).